A 454-amino-acid polypeptide reads, in one-letter code: uncharacterized protein (454 aa).

Residues cysteine 73, cysteine 79, cysteine 82, and cysteine 154 each contribute to the [4Fe-4S] cluster site. S-adenosyl-L-methionine contacts are provided by glutamine 279, phenylalanine 307, aspartate 328, and aspartate 381. Residue cysteine 408 is the Nucleophile of the active site.

The protein belongs to the class I-like SAM-binding methyltransferase superfamily. RNA M5U methyltransferase family.

This is an uncharacterized protein from Leptospira interrogans serogroup Icterohaemorrhagiae serovar copenhageni (strain Fiocruz L1-130).